Consider the following 194-residue polypeptide: uncharacterized protein (194 aa).

The region spanning 2–62 (QGPRERMVVS…CEAVDYAGEH (61 aa)) is the HTH tetR-type domain. Positions 25–44 (AISDVLQHSGAPRGSAYHYF) form a DNA-binding region, H-T-H motif.

This is an uncharacterized protein from Mycobacterium tuberculosis (strain CDC 1551 / Oshkosh).